The chain runs to 356 residues: GTPase Obg (356 aa).

An Obg domain is found at 1-158 (MFIDSVKITL…RLVRLELKLI (158 aa)). The OBG-type G domain maps to 159-339 (ADVGLVGFPN…LKFMLLEEIK (181 aa)). Residues 165 to 172 (GFPNVGKS), 190 to 194 (FTTLT), 212 to 215 (DIPG), 280 to 283 (SKSD), and 320 to 322 (SSL) each bind GTP. Residues serine 172 and threonine 192 each contribute to the Mg(2+) site.

Belongs to the TRAFAC class OBG-HflX-like GTPase superfamily. OBG GTPase family. In terms of assembly, monomer. Mg(2+) is required as a cofactor.

It localises to the cytoplasm. Functionally, an essential GTPase which binds GTP, GDP and possibly (p)ppGpp with moderate affinity, with high nucleotide exchange rates and a fairly low GTP hydrolysis rate. Plays a role in control of the cell cycle, stress response, ribosome biogenesis and in those bacteria that undergo differentiation, in morphogenesis control. The polypeptide is GTPase Obg (Campylobacter jejuni subsp. jejuni serotype O:23/36 (strain 81-176)).